Reading from the N-terminus, the 343-residue chain is Stimulator of interferon genes protein homolog (343 aa).

Asn84 carries N-linked (GlcNAc...) asparagine glycosylation. 2 helical membrane-spanning segments follow: residues 87 to 107 and 109 to 129; these read IYLI…TGNY and NVMP…WSFT. Residue Asn157 participates in 3',2'-cGAMP binding. Asn187 is a glycosylation site (N-linked (GlcNAc...) asparagine). Residues 195-215 form a helical membrane-spanning segment; it reads LVILIPDEMFVNGVLESHLLD. 3',2'-cGAMP is bound by residues Arg232, Lys235, Glu255, Thr258, and Ser262. N-linked (GlcNAc...) asparagine glycans are attached at residues Asn270 and Asn333.

This sequence belongs to the STING family.

The protein localises to the endoplasmic reticulum membrane. In terms of biological role, facilitator of innate immune signaling that binds cyclic dinucleotides produced in response to infection by bacteria and/or viruses, and promotes the activation of the NF-kappa-B transcription factor Rel (Relish). Recognizes and binds cyclic di-GMP (c-di-GMP), a cyclic dinucleotide messenger produced by bacteria such as L.monocytogenes, leading to activation of the peptidoglycan recognition protein (IMD) signaling pathway and activation of Rel (Relish). Innate immune response is triggered in response to double-stranded RNA from viruses delivered to the cytoplasm: Sting acts by specifically binding cyclic dinucleotides 3',2'-cGAMP and 2',3'-cGAMP produced by cGlr1 and cGlr2 in response to RNA virus in the cytosol. Has a strong preference for 3',2'-cGAMP compared to other cyclic dinucleotides such as 2',3'-cGAMP or 3'3'-c-di-GMP. Upon binding to 3',2'-cGAMP, activates an antiviral immune response, leading to the activation of Rel (Relish). Activated in brain in response to Zika virus infection, leading to autophagy. In Drosophila melanogaster (Fruit fly), this protein is Stimulator of interferon genes protein homolog.